The following is a 615-amino-acid chain: 1-deoxy-D-xylulose-5-phosphate synthase (615 aa).

Thiamine diphosphate-binding positions include His76 and Gly117–Ser119. Asp148 serves as a coordination point for Mg(2+). Thiamine diphosphate-binding positions include Gly149–Ala150, Asn177, Tyr284, and Glu365. Position 177 (Asn177) interacts with Mg(2+).

This sequence belongs to the transketolase family. DXPS subfamily. As to quaternary structure, homodimer. Requires Mg(2+) as cofactor. Thiamine diphosphate is required as a cofactor.

The enzyme catalyses D-glyceraldehyde 3-phosphate + pyruvate + H(+) = 1-deoxy-D-xylulose 5-phosphate + CO2. It functions in the pathway metabolic intermediate biosynthesis; 1-deoxy-D-xylulose 5-phosphate biosynthesis; 1-deoxy-D-xylulose 5-phosphate from D-glyceraldehyde 3-phosphate and pyruvate: step 1/1. In terms of biological role, catalyzes the acyloin condensation reaction between C atoms 2 and 3 of pyruvate and glyceraldehyde 3-phosphate to yield 1-deoxy-D-xylulose-5-phosphate (DXP). In Francisella tularensis subsp. novicida (strain U112), this protein is 1-deoxy-D-xylulose-5-phosphate synthase.